Reading from the N-terminus, the 339-residue chain is Probable cytosolic iron-sulfur protein assembly protein CIAO1 (339 aa).

7 WD repeats span residues 14 to 53 (HPDS…WICK), 59 to 98 (GHQR…FECV), 103 to 142 (GHEN…EYEC), 148 to 187 (SHTQ…WVCC), 192 to 231 (GHES…NEQG), 250 to 289 (FHSR…DPQQ), and 301 to 339 (AHSQ…SEGI). The short motif at 176 to 178 (LYR) is the LYR motif; required for interaction with HSC20 element.

This sequence belongs to the WD repeat CIA1 family. Component of the CIA complex. Interacts with CIAO2A and forms a complex with CIAO2B and MMS19; the interactions with CIAO2A and CIAO2B are mutually exclusive. Interacts with CHD1L, ERCC2, IREB2 and POLD1. Component of the MMXD complex, which includes CIAO1, ERCC2, CIAO2B, MMS19 and SLC25A5. Interacts with WT1. Interacts with CIAO3. Interacts (via LYR motif) with HSC20.

The protein localises to the cytoplasm. In terms of biological role, key component of the cytosolic iron-sulfur protein assembly (CIA) complex, a multiprotein complex that mediates the incorporation of iron-sulfur cluster into extramitochondrial Fe/S proteins. As a CIA complex component, interacts specifically with CIAO2A or CIAO2B and MMS19 to assist different branches of iron-sulfur protein assembly, depending of its interactors. The complex CIAO1:CIAO2B:MMS19 binds to and facilitates the assembly of most cytosolic-nuclear Fe/S proteins. CIAO1:CIAO2A specifically matures ACO1 and stabilizes IREB2. Seems to specifically modulate the transactivation activity of WT1. As part of the mitotic spindle-associated MMXD complex it may play a role in chromosome segregation. In Bos taurus (Bovine), this protein is Probable cytosolic iron-sulfur protein assembly protein CIAO1.